The sequence spans 405 residues: L-rhamnonate dehydratase (405 aa).

Substrate-binding residues include H33 and R59. D226, E252, and E280 together coordinate Mg(2+). H329 functions as the Proton acceptor in the catalytic mechanism. E349 is a binding site for substrate.

Belongs to the mandelate racemase/muconate lactonizing enzyme family. RhamD subfamily. Homooctamer; tetramer of dimers. Mg(2+) serves as cofactor.

The enzyme catalyses L-rhamnonate = 2-dehydro-3-deoxy-L-rhamnonate + H2O. Its function is as follows. Catalyzes the dehydration of L-rhamnonate to 2-keto-3-deoxy-L-rhamnonate (KDR). In Escherichia coli O6:K15:H31 (strain 536 / UPEC), this protein is L-rhamnonate dehydratase.